The following is a 396-amino-acid chain: Agropine synthesis cyclase (396 aa).

It belongs to the peptidase M24B family.

In Rhizobium rhizogenes (Agrobacterium rhizogenes), this protein is Agropine synthesis cyclase (ags).